Here is a 169-residue protein sequence, read N- to C-terminus: Crossover junction endodeoxyribonuclease RuvC (169 aa).

Residues Asp11, Glu71, and Asp143 contribute to the active site. Mg(2+)-binding residues include Asp11, Glu71, and Asp143.

It belongs to the RuvC family. As to quaternary structure, homodimer which binds Holliday junction (HJ) DNA. The HJ becomes 2-fold symmetrical on binding to RuvC with unstacked arms; it has a different conformation from HJ DNA in complex with RuvA. In the full resolvosome a probable DNA-RuvA(4)-RuvB(12)-RuvC(2) complex forms which resolves the HJ. Mg(2+) serves as cofactor.

Its subcellular location is the cytoplasm. It catalyses the reaction Endonucleolytic cleavage at a junction such as a reciprocal single-stranded crossover between two homologous DNA duplexes (Holliday junction).. Functionally, the RuvA-RuvB-RuvC complex processes Holliday junction (HJ) DNA during genetic recombination and DNA repair. Endonuclease that resolves HJ intermediates. Cleaves cruciform DNA by making single-stranded nicks across the HJ at symmetrical positions within the homologous arms, yielding a 5'-phosphate and a 3'-hydroxyl group; requires a central core of homology in the junction. The consensus cleavage sequence is 5'-(A/T)TT(C/G)-3'. Cleavage occurs on the 3'-side of the TT dinucleotide at the point of strand exchange. HJ branch migration catalyzed by RuvA-RuvB allows RuvC to scan DNA until it finds its consensus sequence, where it cleaves and resolves the cruciform DNA. The chain is Crossover junction endodeoxyribonuclease RuvC from Bartonella henselae (strain ATCC 49882 / DSM 28221 / CCUG 30454 / Houston 1) (Rochalimaea henselae).